The sequence spans 217 residues: Large ribosomal subunit protein bL25 (217 aa).

Belongs to the bacterial ribosomal protein bL25 family. CTC subfamily. As to quaternary structure, part of the 50S ribosomal subunit; part of the 5S rRNA/L5/L18/L25 subcomplex. Contacts the 5S rRNA. Binds to the 5S rRNA independently of L5 and L18.

This is one of the proteins that binds to the 5S RNA in the ribosome where it forms part of the central protuberance. The protein is Large ribosomal subunit protein bL25 of Methylobacterium sp. (strain 4-46).